The primary structure comprises 77 residues: Serine protease inhibitor 3 (77 aa).

Residues 1-17 (MMFTPLIVLTLLVLATA) form the signal peptide. 4 cysteine pairs are disulfide-bonded: Cys-21–Cys-53, Cys-30–Cys-48, Cys-33–Cys-44, and Cys-55–Cys-68. Positions 21 to 74 (CGPNEQWSGCPKCELQSGESDKPCATICGEPKCYCSPDKYRRIPDGRCIRKIQC) constitute a TIL domain.

Its subcellular location is the secreted. Defends the organism against the host's proteinases. The sequence is that of Serine protease inhibitor 3 from Anisakis simplex (Herring worm).